The chain runs to 411 residues: tRNA (uracil(54)-C(5))-methyltransferase (411 aa).

The [4Fe-4S] cluster site is built by C62, C68, C71, and C138. Residues Q254, Y280, T285, 301–302 (DS), D328, and D342 contribute to the S-adenosyl-L-methionine site. Residue C369 is the Nucleophile of the active site. E402 acts as the Proton acceptor in catalysis.

It belongs to the class I-like SAM-binding methyltransferase superfamily. RNA M5U methyltransferase family.

The catalysed reaction is uridine(54) in tRNA + S-adenosyl-L-methionine = 5-methyluridine(54) in tRNA + S-adenosyl-L-homocysteine + H(+). Functionally, catalyzes the formation of 5-methyl-uridine at position 54 (m5U54) in tRNA. In Pyrococcus furiosus (strain ATCC 43587 / DSM 3638 / JCM 8422 / Vc1), this protein is tRNA (uracil(54)-C(5))-methyltransferase.